Here is a 289-residue protein sequence, read N- to C-terminus: ATP synthase subunit a (289 aa).

Helical transmembrane passes span alanine 43–phenylalanine 63, serine 101–valine 121, leucine 160–isoleucine 180, isoleucine 193–alanine 213, valine 232–isoleucine 252, and alanine 259–valine 279.

Belongs to the ATPase A chain family. In terms of assembly, F-type ATPases have 2 components, CF(1) - the catalytic core - and CF(0) - the membrane proton channel. CF(1) has five subunits: alpha(3), beta(3), gamma(1), delta(1), epsilon(1). CF(0) has three main subunits: a(1), b(2) and c(9-12). The alpha and beta chains form an alternating ring which encloses part of the gamma chain. CF(1) is attached to CF(0) by a central stalk formed by the gamma and epsilon chains, while a peripheral stalk is formed by the delta and b chains.

It localises to the cell inner membrane. Functionally, key component of the proton channel; it plays a direct role in the translocation of protons across the membrane. The polypeptide is ATP synthase subunit a (Pseudomonas syringae pv. tomato (strain ATCC BAA-871 / DC3000)).